The chain runs to 362 residues: Very-long-chain (3R)-3-hydroxyacyl-CoA dehydratase 3 (362 aa).

Met1 is subject to N-acetylmethionine. The Cytoplasmic segment spans residues 1-149; that stretch reads MENQVLTPHV…ETLTNLRKGY (149 aa). The CS domain occupies 5–94; it reads VLTPHVYWAQ…KVSQWWERLT (90 aa). Residue Thr7 is modified to Phosphothreonine. Residues 111–136 are a coiled coil; it reads LDESDAEMELRAKEEERLNKLRLESE. A phosphoserine mark is found at Ser114 and Ser135. The chain crosses the membrane as a helical span at residues 150–170; the sequence is LFMYNLVQFLGFSWIFVNLTV. The Lumenal segment spans residues 171 to 185; that stretch reads RFCILGKESFYDTFH. A helical membrane pass occupies residues 186–207; it reads TVADMMYFCQMLAVVETINAAI. The Cytoplasmic segment spans residues 208-217; sequence GVTTSPVLPS. The helical transmembrane segment at 218–235 threads the bilayer; the sequence is LIQLLGRNFILFIIFGTM. Residues 236 to 241 are Lumenal-facing; it reads EEMQNK. Residues 242–256 traverse the membrane as a helical segment; the sequence is AVVFFVFYLWSAIEI. Over 257-279 the chain is Cytoplasmic; that stretch reads FRYSFYMLTCIDMDWKVLTWLRY. The chain crosses the membrane as a helical span at residues 280–298; it reads TLWIPLYPLGCLAEAVSVI. Catalysis depends on residues Tyr286 and Glu293. The Lumenal portion of the chain corresponds to 299-322; the sequence is QSIPIFNETGRFSFTLPYPVKIKV. The helical transmembrane segment at 323–343 threads the bilayer; the sequence is RFSFFLQIYLIMIFLGLYINF. At 344–362 the chain is on the cytoplasmic side; the sequence is RHLYKQRRRRYGQKKKKIH.

Belongs to the very long-chain fatty acids dehydratase HACD family. In terms of assembly, may interact with enzymes of the ELO family (including ELOVL1); with those enzymes that mediate condensation, the first of the four steps of the reaction cycle responsible for fatty acids elongation, may be part of a larger fatty acids elongase complex. Interacts with RAC1. Associates with internalized insulin receptor/INSR complexes on Golgi/endosomal membranes; HACD3/PTPLAD1 together with ATIC and PRKAA2/AMPK2 is proposed to be part of a signaling network regulating INSR autophosphorylation and endocytosis. Highly expressed in testis, kidney, brain, liver and weakly in skeletal muscle, spleen and heart. No expression detected in leukocytes.

It localises to the endoplasmic reticulum membrane. The enzyme catalyses a very-long-chain (3R)-3-hydroxyacyl-CoA = a very-long-chain (2E)-enoyl-CoA + H2O. The catalysed reaction is (3R)-hydroxyhexadecanoyl-CoA = (2E)-hexadecenoyl-CoA + H2O. It participates in lipid metabolism; fatty acid biosynthesis. Functionally, catalyzes the third of the four reactions of the long-chain fatty acids elongation cycle. This endoplasmic reticulum-bound enzymatic process, allows the addition of two carbons to the chain of long- and very long-chain fatty acids/VLCFAs per cycle. This enzyme catalyzes the dehydration of the 3-hydroxyacyl-CoA intermediate into trans-2,3-enoyl-CoA, within each cycle of fatty acid elongation. Thereby, it participates in the production of VLCFAs of different chain lengths that are involved in multiple biological processes as precursors of membrane lipids and lipid mediators. May be involved in Rac1-signaling pathways leading to the modulation of gene expression. Promotes insulin receptor/INSR autophosphorylation and is involved in INSR internalization. In Homo sapiens (Human), this protein is Very-long-chain (3R)-3-hydroxyacyl-CoA dehydratase 3.